The primary structure comprises 303 residues: UDP-N-acetylenolpyruvoylglucosamine reductase (303 aa).

In terms of domain architecture, FAD-binding PCMH-type spans 27–217 (KVGGISQVFY…QTVRKLTQPI (191 aa)). Arg175 is a catalytic residue. The active-site Proton donor is the Ser224. Glu294 is a catalytic residue.

It belongs to the MurB family. It depends on FAD as a cofactor.

It is found in the cytoplasm. The catalysed reaction is UDP-N-acetyl-alpha-D-muramate + NADP(+) = UDP-N-acetyl-3-O-(1-carboxyvinyl)-alpha-D-glucosamine + NADPH + H(+). It participates in cell wall biogenesis; peptidoglycan biosynthesis. Its function is as follows. Cell wall formation. The chain is UDP-N-acetylenolpyruvoylglucosamine reductase from Orientia tsutsugamushi (strain Ikeda) (Rickettsia tsutsugamushi).